A 492-amino-acid chain; its full sequence is Transcription factor IIIB 60 kDa subunit (492 aa).

Residues 1–30 (MGCPNCGSTTFESDTASGNTYCTQCGVVVE) form a TFIIB-type zinc finger. Cys-3, Cys-6, Cys-22, and Cys-25 together coordinate Zn(2+). The tract at residues 440-468 (QPRKRRRYRPRDSTSDGIADTAAESAKEM) is disordered.

The protein belongs to the TFIIB family. In terms of assembly, TFIIIB comprises the TATA-binding protein (TBP), the B-related factor (BRF) and a third subunit (Potential). Interacts with maf1.

Its subcellular location is the nucleus. In terms of biological role, general activator of RNA polymerase III transcription. This is Transcription factor IIIB 60 kDa subunit (brf1) from Schizosaccharomyces pombe (strain 972 / ATCC 24843) (Fission yeast).